Here is a 274-residue protein sequence, read N- to C-terminus: Diaminopimelate epimerase (274 aa).

Positions 11, 44, and 64 each coordinate substrate. C73 serves as the catalytic Proton donor. Substrate-binding positions include 74-75 (GN), N157, N190, and 208-209 (ER). The Proton acceptor role is filled by C217. 218–219 (GS) lines the substrate pocket.

It belongs to the diaminopimelate epimerase family. Homodimer (Potential). Previously DapF has been proposed to be a monomer, however it seems that it adopts a dimeric structure.

The protein localises to the cytoplasm. It catalyses the reaction (2S,6S)-2,6-diaminopimelate = meso-2,6-diaminopimelate. Its pathway is amino-acid biosynthesis; L-lysine biosynthesis via DAP pathway; DL-2,6-diaminopimelate from LL-2,6-diaminopimelate: step 1/1. With respect to regulation, inhibited by LL-aziridino (LL-AziDAP), DL-aziridino (DL-AziDAP). Also inhibited by (2S,3R,6S)-2,6-diamino-3-fluoropimelate (L,L-3-fluoro-DAP) and (2R,3S,6S)-2,6-diamino-3-fluoropimelate (D,L-3-fluoro-DAP). Its function is as follows. Catalyzes the stereoinversion of LL-2,6-diaminopimelate (L,L-DAP) to meso-diaminopimelate (meso-DAP), a precursor of L-lysine and an essential component of the bacterial peptidoglycan. Only accepts DAP isomers with the L configuration. This Haemophilus influenzae (strain ATCC 51907 / DSM 11121 / KW20 / Rd) protein is Diaminopimelate epimerase.